The sequence spans 106 residues: Urease subunit beta (106 aa).

This sequence belongs to the urease beta subunit family. As to quaternary structure, heterotrimer of UreA (gamma), UreB (beta) and UreC (alpha) subunits. Three heterotrimers associate to form the active enzyme. The apoenzyme interacts with an accessory complex composed of UreD, UreF and UreG, which is required for the assembly of the nickel containing metallocenter of UreC. The UreE protein may also play a direct role as a metallochaperone in nickel transfer to the urease apoprotein.

It is found in the cytoplasm. The enzyme catalyses urea + 2 H2O + H(+) = hydrogencarbonate + 2 NH4(+). Its pathway is nitrogen metabolism; urea degradation; CO(2) and NH(3) from urea (urease route): step 1/1. The apoenzyme can be activated in vitro in the presence of nickel ions and carbon dioxide, which promotes carboxylation of 'Lys-217' of the UreC (alpha) subunit. The chain is Urease subunit beta from Klebsiella aerogenes (Enterobacter aerogenes).